A 699-amino-acid polypeptide reads, in one-letter code: MARKTPIERYRNIGICAHVDAGKTTTTERVLFYTGLSHKIGEVHDGAATMDWMEQEQERGITITSAATTCFWAGMQQQFDQHRVNIIDTPGHVDFTIEVERSLRVLDGAVVVLCGSSGVQPQTETVWRQANKYEVPRMVFVNKMDRAGANFERVVKQLKDRLGATPVPLQMTIGAEDEFKGVVDLVKMKSIIWNEADQGMTFEYQEIPADLQEKCAKLREQLVEAAAEANDDYMNKYLEEGELTEEEIKAGIRARTLANEIVPVLGGSAFKNKGVQAVLDAVIEYLPSPTEVKAIEGILDDGETVAVRKSDDNEPFSALAFKIATDPFVGTLTFIRVYSGVLESGTGVYNPVKSKKERIGRMVQMHSNNREEIKEVRAGDIAAMIGLKDVTTGDTLCDPNNIITLERMEFPDPVISVAVEPKSKADQEKMGIALGKLAQEDPSFRVKTDEETGQTIISGMGELHLDIIVDRMRREFKVEANIGKPQVAYREAIRNTCEIEGKFVRQSGGRGQYGHVWIKFEPRAEGEGLEFVNEIVGGVVPKEYVPAIQKGIEEQMQNGILAGYPLLALKATVFDGSYHDVDSNEMAFKIAASMATKQLAGKGGAVLLEPIMKVEVVTPEENMGDVVGDLNRRRGLIQGMDESVSGKVVNAEVPLAEMFGYATDLRSATQGRATYTMEFAQYAEAPNNVAEAIISARSK.

Residues 8–290 (ERYRNIGICA…AVIEYLPSPT (283 aa)) enclose the tr-type G domain. GTP-binding positions include 17 to 24 (AHVDAGKT), 88 to 92 (DTPGH), and 142 to 145 (NKMD).

This sequence belongs to the TRAFAC class translation factor GTPase superfamily. Classic translation factor GTPase family. EF-G/EF-2 subfamily.

It is found in the cytoplasm. In terms of biological role, catalyzes the GTP-dependent ribosomal translocation step during translation elongation. During this step, the ribosome changes from the pre-translocational (PRE) to the post-translocational (POST) state as the newly formed A-site-bound peptidyl-tRNA and P-site-bound deacylated tRNA move to the P and E sites, respectively. Catalyzes the coordinated movement of the two tRNA molecules, the mRNA and conformational changes in the ribosome. This chain is Elongation factor G 1, found in Hahella chejuensis (strain KCTC 2396).